A 592-amino-acid chain; its full sequence is MKRSKELITKNHSQEETSILRCWKCRKCIASSGCFMEYFENQVIKDKDDSVDAQNICHVWHMNIESLPEWISCLIQKAQWTVGKLNCPFCGARLGGFNFVSTPKCSCGQLAAVHLSKSRTDYQPTQAGRLMRPSVKYLSHPRVQSGCDKEVLLTGGGSKNRNHRLLNMARNNNDPGRLTEALCLEVRPTYFEMKNEKLLSKASEPKYQLFVPQLVTGRCTTRAFHRKSHSLDLNISEKLTLLPTLYEIRGKTTAYSRLNETQPIDLSGLPLQSSKNSCSFQNPSSFDPGMLLQRFSVAPHETQTQRGGEFQCGLEAASVYSDHTNTNNLTFLMDLPSAGRSMPEASDQEEHLSPLDFLHSANFSLGSINQRLNKRERSKLKNLRRKQRRRERWLQKQGKYSGVGFLDHMTLNNEMSTDEDNEYAEEKDSYICAVCLDVYFNPYMCYPCRHIFCEPCLRTLAKDNPSSTPCPLCRTIISRVFFQTELNNATKTFFTKEYLKIKQSFQKSNSAKWPLPSCRKAFHLFGGFHRHAAPVTRRQFPHGAHRMDYLHFEDDSRGWWFDMDMVIIYIYSVNWVIGFIVFCFLCYFFFPF.

Topologically, residues 1–564 (MKRSKELITK…DSRGWWFDMD (564 aa)) are cytoplasmic. S230 bears the Phosphoserine mark. Residues 432 to 474 (CAVCLDVYFNPYMCYPCRHIFCEPCLRTLAKDNPSSTPCPLCR) form an RING-type zinc finger. The chain crosses the membrane as a helical span at residues 565-585 (MVIIYIYSVNWVIGFIVFCFL). Residues 586 to 592 (CYFFFPF) lie on the Extracellular side of the membrane.

As to quaternary structure, interacts with ZIC2.

The protein localises to the endoplasmic reticulum membrane. Its subcellular location is the nucleus envelope. It catalyses the reaction S-ubiquitinyl-[E2 ubiquitin-conjugating enzyme]-L-cysteine + [acceptor protein]-L-lysine = [E2 ubiquitin-conjugating enzyme]-L-cysteine + N(6)-ubiquitinyl-[acceptor protein]-L-lysine.. It functions in the pathway protein modification; protein ubiquitination. Its function is as follows. E3 ubiquitin-protein ligase which promotes polyubiquitination and degradation by the proteasome pathway of ZIC2. The polypeptide is E3 ubiquitin-protein ligase RNF180 (RNF180) (Pongo abelii (Sumatran orangutan)).